We begin with the raw amino-acid sequence, 159 residues long: MKLNEIKDNEGSSKDRIRVGRGIGSGKGKTGGRGVKGQKARSGVAVNGFEGGQMPIYRRLPKRGFNNIFASEFTTVSLGRIQTAIDAGKLDASATIDAAALKAAGVIRRLKDGVRVLGDGELTTKVTIEVAGASKPAVEKIEKAGGTIKQLSAAAEKSE.

Basic and acidic residues predominate over residues 1-18; the sequence is MKLNEIKDNEGSSKDRIR. Residues 1-39 form a disordered region; that stretch reads MKLNEIKDNEGSSKDRIRVGRGIGSGKGKTGGRGVKGQK. The span at 21–35 shows a compositional bias: gly residues; sequence RGIGSGKGKTGGRGV.

It belongs to the universal ribosomal protein uL15 family. Part of the 50S ribosomal subunit.

Functionally, binds to the 23S rRNA. The sequence is that of Large ribosomal subunit protein uL15 from Allorhizobium ampelinum (strain ATCC BAA-846 / DSM 112012 / S4) (Agrobacterium vitis (strain S4)).